The primary structure comprises 643 residues: Threonine--tRNA ligase (643 aa).

One can recognise a TGS domain in the interval 1–61 (MPTIKFIDGT…TNDSIVKFVY (61 aa)). The tract at residues 244–535 (DHRKISKILD…LIEEYIGNFP (292 aa)) is catalytic. 3 residues coordinate Zn(2+): C335, H386, and H512.

Belongs to the class-II aminoacyl-tRNA synthetase family. In terms of assembly, homodimer. Zn(2+) serves as cofactor.

The protein localises to the cytoplasm. It carries out the reaction tRNA(Thr) + L-threonine + ATP = L-threonyl-tRNA(Thr) + AMP + diphosphate + H(+). Catalyzes the attachment of threonine to tRNA(Thr) in a two-step reaction: L-threonine is first activated by ATP to form Thr-AMP and then transferred to the acceptor end of tRNA(Thr). Also edits incorrectly charged L-seryl-tRNA(Thr). The chain is Threonine--tRNA ligase from Buchnera aphidicola subsp. Baizongia pistaciae (strain Bp).